We begin with the raw amino-acid sequence, 166 residues long: Ureidoglycolate lyase (166 aa).

This sequence belongs to the ureidoglycolate lyase family. Homodimer. It depends on Ni(2+) as a cofactor.

The enzyme catalyses (S)-ureidoglycolate = urea + glyoxylate. It participates in nitrogen metabolism; (S)-allantoin degradation. In terms of biological role, catalyzes the catabolism of the allantoin degradation intermediate (S)-ureidoglycolate, generating urea and glyoxylate. Involved in the utilization of allantoin as nitrogen source. In Rhizobium etli (strain ATCC 51251 / DSM 11541 / JCM 21823 / NBRC 15573 / CFN 42), this protein is Ureidoglycolate lyase.